We begin with the raw amino-acid sequence, 417 residues long: Serine hydroxymethyltransferase (417 aa).

(6S)-5,6,7,8-tetrahydrofolate-binding positions include Leu121 and Gly125–Leu127. The residue at position 229 (Lys229) is an N6-(pyridoxal phosphate)lysine. Ser355–Phe357 is a binding site for (6S)-5,6,7,8-tetrahydrofolate.

The protein belongs to the SHMT family. Homodimer. Pyridoxal 5'-phosphate serves as cofactor.

The protein resides in the cytoplasm. It catalyses the reaction (6R)-5,10-methylene-5,6,7,8-tetrahydrofolate + glycine + H2O = (6S)-5,6,7,8-tetrahydrofolate + L-serine. It functions in the pathway one-carbon metabolism; tetrahydrofolate interconversion. The protein operates within amino-acid biosynthesis; glycine biosynthesis; glycine from L-serine: step 1/1. In terms of biological role, catalyzes the reversible interconversion of serine and glycine with tetrahydrofolate (THF) serving as the one-carbon carrier. This reaction serves as the major source of one-carbon groups required for the biosynthesis of purines, thymidylate, methionine, and other important biomolecules. Also exhibits THF-independent aldolase activity toward beta-hydroxyamino acids, producing glycine and aldehydes, via a retro-aldol mechanism. The polypeptide is Serine hydroxymethyltransferase (Shewanella sp. (strain ANA-3)).